Here is a 397-residue protein sequence, read N- to C-terminus: MRQILVLLLFVTLVYGLIRVPLKRQKSIRKTPKEKGKLSHVWTQQGIDMVQYTDSCNNDQAPSEPLINYMDVQYFGEISIGTPPQNFTVIFDTGSSNLWVPSVYCISPACAQHNRFQPQLSSTYESNGNNFSLQYGTGSLSGVIGIDSVTVEGILVQNQQFGESVSEPGSTFVDASFDGILGLGYPSIAVGGCTPVFDNMIAQNLVELPMFSVYMSRDPNSPVGGELVFGGFDASRFSGQLNWVPVTNQGYWQIQLDNIQINGEVVFCSGGCQAIVDTGTSMITGPSSDIVQLQSIIGASAANGDYEVDCTVLNKMPTMTFTINGIGYQMTPQQYTLQDDDGVCSSGFQGLDISPPAGPLWILGDVFIGQYYSVFDRGNNRVGLAPVVPYPPLMNGV.

A signal peptide spans 1-16; the sequence is MRQILVLLLFVTLVYG. Residues 17–49 constitute a propeptide, activation peptide; that stretch reads LIRVPLKRQKSIRKTPKEKGKLSHVWTQQGIDM. Positions 74–385 constitute a Peptidase A1 domain; sequence YFGEISIGTP…DRGNNRVGLA (312 aa). Residue asparagine 86 is glycosylated (N-linked (GlcNAc...) asparagine). Aspartate 92 is an active-site residue. Cysteine 105 and cysteine 110 are joined by a disulfide. Residue asparagine 130 is glycosylated (N-linked (GlcNAc...) asparagine). A disulfide bond links cysteine 268 and cysteine 272. Residue aspartate 277 is part of the active site. Cysteines 310 and 344 form a disulfide.

It belongs to the peptidase A1 family. In terms of assembly, homodimer; disulfide-linked. In terms of processing, glycosylated. Contains high mannose-type oligosaccharide. Expressed predominantly in the anterior and posterior adult stomach and at much lower levels in the larval foregut.

It is found in the endosome. The enzyme catalyses Similar to cathepsin D, but slightly broader specificity.. Functionally, may have a role in immune function. Probably involved in the processing of antigenic peptides during MHC class II-mediated antigen presentation. In Xenopus laevis (African clawed frog), this protein is Cathepsin E-B (ctse-b).